Consider the following 311-residue polypeptide: tRNA dimethylallyltransferase (311 aa).

Position 11 to 18 (11 to 18) interacts with ATP; sequence GPTASGKS. 13–18 provides a ligand contact to substrate; that stretch reads TASGKS. 2 interaction with substrate tRNA regions span residues 36 to 39 and 160 to 164; these read DSMQ and QRLIR.

The protein belongs to the IPP transferase family. Monomer. Mg(2+) is required as a cofactor.

It catalyses the reaction adenosine(37) in tRNA + dimethylallyl diphosphate = N(6)-dimethylallyladenosine(37) in tRNA + diphosphate. Catalyzes the transfer of a dimethylallyl group onto the adenine at position 37 in tRNAs that read codons beginning with uridine, leading to the formation of N6-(dimethylallyl)adenosine (i(6)A). This is tRNA dimethylallyltransferase from Rickettsia typhi (strain ATCC VR-144 / Wilmington).